A 166-amino-acid polypeptide reads, in one-letter code: Thioredoxin, mitochondrial (166 aa).

A mitochondrion-targeting transit peptide spans 1–59; that stretch reads MAQRLLLRRFLTSIISGKPSQSRWAPVASRALQTPQYSPGYLTVTPSQARSIYTTRVCS. The region spanning 61-166 is the Thioredoxin domain; sequence TFNIQDGPDF…LEAFLKKLIG (106 aa). Active-site nucleophile residues include Cys-90 and Cys-93. Cys-90 and Cys-93 are disulfide-bonded. At Lys-152 the chain carries N6-acetyllysine; alternate. The residue at position 152 (Lys-152) is an N6-succinyllysine; alternate.

This sequence belongs to the thioredoxin family. As to quaternary structure, monomer.

The protein localises to the mitochondrion. Its function is as follows. Important for the control of mitochondrial reactive oxygen species homeostasis, apoptosis regulation and cell viability. Is involved in various redox reactions including the reduction of protein disulfide bonds, through the reversible oxidation of its active center dithiol to a disulfide. The protein is Thioredoxin, mitochondrial (TXN2) of Bos taurus (Bovine).